We begin with the raw amino-acid sequence, 460 residues long: A-type ATP synthase subunit B (460 aa).

It belongs to the ATPase alpha/beta chains family. In terms of assembly, has multiple subunits with at least A(3), B(3), C, D, E, F, H, I and proteolipid K(x).

The protein resides in the cell membrane. Component of the A-type ATP synthase that produces ATP from ADP in the presence of a proton gradient across the membrane. The B chain is a regulatory subunit. The sequence is that of A-type ATP synthase subunit B from Methanosarcina barkeri (strain Fusaro / DSM 804).